Reading from the N-terminus, the 74-residue chain is Probable molt-inhibiting hormone (74 aa).

3 cysteine pairs are disulfide-bonded: Cys-6/Cys-43, Cys-23/Cys-39, and Cys-26/Cys-52. An Alanine amide modification is found at Ala-74.

It is found in the secreted. In terms of biological role, inhibits Y-organs where molting hormone (ecdysteroid) is secreted. A molting cycle is initiated when MIH secretion diminishes or stops. Has little or no hyperglycemic activity. The protein is Probable molt-inhibiting hormone of Jasus lalandii (Cape rock lobster).